The chain runs to 166 residues: 3-isopropylmalate dehydratase small subunit (166 aa).

This sequence belongs to the LeuD family. LeuD type 2 subfamily. In terms of assembly, heterodimer of LeuC and LeuD.

The catalysed reaction is (2R,3S)-3-isopropylmalate = (2S)-2-isopropylmalate. It participates in amino-acid biosynthesis; L-leucine biosynthesis; L-leucine from 3-methyl-2-oxobutanoate: step 2/4. Catalyzes the isomerization between 2-isopropylmalate and 3-isopropylmalate, via the formation of 2-isopropylmaleate. The chain is 3-isopropylmalate dehydratase small subunit from Aliarcobacter butzleri (strain RM4018) (Arcobacter butzleri).